A 1213-amino-acid chain; its full sequence is Probable ATP-binding protein BrxC (1213 aa).

This sequence belongs to the BrxC family.

Its function is as follows. BREX systems (bacteriophage exclusion) provide immunity against bacteriophage. Part of a type 1 BREX system which protects against dsDNA phage. This system allows phage adsorption but prevents phage DNA replication, without degradation of the phage DNA. Methylation of bacterial DNA by PglX guides self/non-self discrimination. When the brxA-brxB-brxC-pglX-pglZ-brxL genes are transformed into a susceptible E.coli strain (BW25113) they confer very high resistance to infection by bacteriophage VR7 and VpaE1, about 100-fold protection against lambda, T5 and T7 and no protection against RNA phage Qbeta, ssDNA phage M13 or dSDNA phage T4 and VR5. Glycosylated phage DNA is not susceptible to BREX. The BREX system does not confer resistance to lysogenic lambda phage, i.e. prophage that are integrated into the chromosomal DNA and then induced to form phage. The polypeptide is Probable ATP-binding protein BrxC (Escherichia coli O9:H4 (strain HS)).